Here is a 366-residue protein sequence, read N- to C-terminus: Isocitrate dehydrogenase [NAD] subunit alpha, mitochondrial (366 aa).

The transit peptide at 1–27 directs the protein to the mitochondrion; the sequence is MAGPAWISKVSRLLGAFHNPKQVTRGF. The residue at position 77 (Lys77) is an N6-succinyllysine. The residue at position 101 (Thr101) is a Phosphothreonine. Substrate-binding residues include Arg115, Arg125, and Arg146. Position 223 is an N6-acetyllysine (Lys223). Residues Asp233, Asp257, and Asp261 each contribute to the Mg(2+) site. Lys343 carries the N6-acetyllysine; alternate modification. Lys343 bears the N6-succinyllysine; alternate mark. Position 350 is an N6-succinyllysine (Lys350).

Belongs to the isocitrate and isopropylmalate dehydrogenases family. Heterooligomer of subunits alpha (IDH3A), beta (IDH3B), and gamma (IDH3G) in the apparent ratio of 2:1:1. The heterodimer containing one IDH3A and one IDH3B subunit and the heterodimer containing one IDH3A and one IDH3G subunit assemble into a heterotetramer (which contains two subunits of IDH3A, one of IDH3B and one of IDH3G) and further into the heterooctamer. The cofactor is Mg(2+). Requires Mn(2+) as cofactor.

It localises to the mitochondrion. It catalyses the reaction D-threo-isocitrate + NAD(+) = 2-oxoglutarate + CO2 + NADH. Its activity is regulated as follows. The heterotetramer and the heterodimer composed of IDH3A and IDH3G subunits can be allosterically activated by citrate (CIT) or/and ADP, and the two activators can act independently or synergistically. The heterodimer composed of IDH3A and IDH3B subunits cannot be allosterically regulated and the allosteric regulation of the heterotetramer is through the IDH3G subunit and not the IDH3B subunit. The IDH3G subunit contains the allosteric site which consists of a CIT-binding site and an ADP-binding site, and the binding of CIT and ADP causes conformational changes at the allosteric site which are transmitted to the active site in the catalytic subunit (IDH3A) through a cascade of conformational changes at the heterodimer interface, leading to stabilization of the isocitrate-binding at the active site and thus activation of the enzyme. ATP can activate the heterotetramer and the heterodimer composed of IDH3A and IDH3G subunits at low concentrations but inhibits their activities at high concentrations, whereas ATP exhibits only inhibitory effect on the heterodimer composed of IDH3A and IDH3B subunits. Functionally, catalytic subunit of the enzyme which catalyzes the decarboxylation of isocitrate (ICT) into alpha-ketoglutarate. The heterodimer composed of the alpha (IDH3A) and beta (IDH3B) subunits and the heterodimer composed of the alpha (IDH3A) and gamma (IDH3G) subunits, have considerable basal activity but the full activity of the heterotetramer (containing two subunits of IDH3A, one of IDH3B and one of IDH3G) requires the assembly and cooperative function of both heterodimers. In Homo sapiens (Human), this protein is Isocitrate dehydrogenase [NAD] subunit alpha, mitochondrial.